The sequence spans 355 residues: Mitogen-activated protein kinase (355 aa).

Positions 23–311 (YDIQDVVGEG…VEEALKHPYL (289 aa)) constitute a Protein kinase domain. ATP-binding positions include 29 to 37 (VGEGAYGVV) and Lys52. The active-site Proton acceptor is the Asp147. The residue at position 183 (Thr183) is a Phosphothreonine. Positions 183–185 (TEY) match the TXY motif. Tyr185 carries the post-translational modification Phosphotyrosine.

Belongs to the protein kinase superfamily. CMGC Ser/Thr protein kinase family. MAP kinase subfamily. Dually phosphorylated on Thr-183 and Tyr-185, which activates the enzyme.

It is found in the nucleus. The enzyme catalyses L-seryl-[protein] + ATP = O-phospho-L-seryl-[protein] + ADP + H(+). It carries out the reaction L-threonyl-[protein] + ATP = O-phospho-L-threonyl-[protein] + ADP + H(+). Its activity is regulated as follows. Activated by tyrosine and threonine phosphorylation. In terms of biological role, responds to activation by environmental stress by phosphorylating downstream targets. The protein is Mitogen-activated protein kinase (MAPK) of Fusarium vanettenii (Neocosmospora pisi).